The primary structure comprises 315 residues: Oxalate oxidoreductase subunit delta (315 aa).

4Fe-4S ferredoxin-type domains lie at Q252–E280 and E281–E310. Residues C261, C264, C267, C271, C290, C293, C296, and C300 each coordinate [4Fe-4S] cluster.

Dimer of heterotrimer of one alpha, one beta and one delta subunit. It depends on [4Fe-4S] cluster as a cofactor.

The enzyme catalyses oxidized 2[4Fe-4S]-[ferredoxin] + oxalate = reduced 2[4Fe-4S]-[ferredoxin] + 2 CO2. Functionally, catalyzes the anaerobic oxidation of oxalate using a broad range of electron acceptors, including ferredoxin and the nickel-dependent carbon monoxide dehydrogenase. Does not require coenzyme A as cosubstrate. Enables anaerobic growth on oxalate which is used as energy source by the bacteria. The chain is Oxalate oxidoreductase subunit delta from Moorella thermoacetica (strain ATCC 39073 / JCM 9320).